We begin with the raw amino-acid sequence, 469 residues long: Probable acetate kinase (469 aa).

Asn-30 is a Mg(2+) binding site. Lys-37 provides a ligand contact to ATP. Arg-122 provides a ligand contact to substrate. The active-site Proton donor/acceptor is Asp-179. ATP is bound at residue 239–243 (HLGSG). Glu-453 lines the Mg(2+) pocket.

This sequence belongs to the acetokinase family. Requires Mg(2+) as cofactor.

It catalyses the reaction acetate + ATP = acetyl phosphate + ADP. It participates in metabolic intermediate biosynthesis; acetyl-CoA biosynthesis; acetyl-CoA from acetate: step 1/2. This chain is Probable acetate kinase, found in Neurospora crassa (strain ATCC 24698 / 74-OR23-1A / CBS 708.71 / DSM 1257 / FGSC 987).